Here is a 353-residue protein sequence, read N- to C-terminus: Methionine import ATP-binding protein MetN (353 aa).

The region spanning isoleucine 11–leucine 251 is the ABC transporter domain. Glycine 48–serine 55 contributes to the ATP binding site.

The protein belongs to the ABC transporter superfamily. Methionine importer (TC 3.A.1.24) family. As to quaternary structure, the complex is composed of two ATP-binding proteins (MetN), two transmembrane proteins (MetI) and a solute-binding protein (MetQ).

The protein resides in the cell inner membrane. It catalyses the reaction L-methionine(out) + ATP + H2O = L-methionine(in) + ADP + phosphate + H(+). It carries out the reaction D-methionine(out) + ATP + H2O = D-methionine(in) + ADP + phosphate + H(+). In terms of biological role, part of the ABC transporter complex MetNIQ involved in methionine import. Responsible for energy coupling to the transport system. The sequence is that of Methionine import ATP-binding protein MetN from Cereibacter sphaeroides (strain ATCC 17023 / DSM 158 / JCM 6121 / CCUG 31486 / LMG 2827 / NBRC 12203 / NCIMB 8253 / ATH 2.4.1.) (Rhodobacter sphaeroides).